Here is a 312-residue protein sequence, read N- to C-terminus: Tumor necrosis factor receptor type 1-associated DEATH domain protein (312 aa).

Residues 147–163 carry the Nuclear export signal motif; it reads LRDEELAELEDALRNLK. The interval 170–195 is disordered; it reads GGDGEVASAPLQPPVPSLSEVKPPPP. Positions 179-289 constitute a Death domain; that stretch reads PLQPPVPSLS…ATLQRLVEAL (111 aa). The span at 180 to 195 shows a compositional bias: pro residues; that stretch reads LQPPVPSLSEVKPPPP. The interval 222 to 289 is interaction with KRT14 and KRT18; sequence FARSVGLKWR…ATLQRLVEAL (68 aa). Positions 231-244 match the Nuclear localization signal motif; sequence RKVGRSLQRGCRAL. R235 and R245 each carry a (Microbial infection) N-beta-linked (GlcNAc) arginine glycan.

As to quaternary structure, stimulation of TNF-alpha receptor TNFRSF1A leads to the formation of two distinct signaling complexes. Plasma membrane-bound complex I is composed of TNFRSF1A, TRADD, RIPK1, TRAF2 and BIRC2/c-IAP1 or BIRC3 which interacts with CHUCK/IKK-alpha, IKBKB/IKK-beta and IKBKG/IKK-gamma promoting cell survival. Subsequently, TRADD, RIPK1 and TRAF2 dissociate from TNFRSF1A and form cytoplasmic complex II with FADD and caspase CASP8 promoting cell apoptosis. Within complex I, interacts with TNFRSF1A/TNFR1, TRAF2 and kinase RIPK1. Within complex I, interacts with TRPC4AP; the interaction promotes NF-kappa B activation. UXT1 associates with complex I; the interaction prevents the formation of complex II. Within complex I Interacts with scaffold protein DAB2IP. Interacts with autophagy receptor SQSTM1. Interacts with E3 ligase TRIP12. Interacts with kinase HIPK2. Interacts with keratin KRT14. Interacts with keratin KRT18. Interacts with keratins KRT16 and KRT17. Interacts with FADD. Interacts with TOMM70. Interacts with TMC8; the interaction impairs the formation of complex I and facilites complex II formation. In terms of processing, (Microbial infection) Glycosylated at Arg-235 by enteropathogenic E.coli protein NleB1, C.rodentium protein NleB and S.typhimurium proteins Ssek1 and Ssek3: arginine GlcNAcylation prevents homotypic/heterotypic death domain interactions and assembly of the oligomeric TNFRSF1A/TNFR1 complex, thereby disrupting TNF signaling. Found in all examined tissues.

The protein localises to the nucleus. It is found in the cytoplasm. The protein resides in the cytoskeleton. Adapter molecule for TNFRSF1A/TNFR1 that specifically associates with the cytoplasmic domain of activated TNFRSF1A/TNFR1 mediating its interaction with FADD. Overexpression of TRADD leads to two major TNF-induced responses, apoptosis and activation of NF-kappa-B. The nuclear form acts as a tumor suppressor by preventing ubiquitination and degradation of isoform p19ARF/ARF of CDKN2A by TRIP12: acts by interacting with TRIP12, leading to disrupt interaction between TRIP12 and isoform p19ARF/ARF of CDKN2A. This is Tumor necrosis factor receptor type 1-associated DEATH domain protein from Homo sapiens (Human).